A 286-amino-acid polypeptide reads, in one-letter code: Bifunctional protein FolD (286 aa).

NADP(+) is bound by residues 165–167, serine 190, and valine 231; that span reads GRS.

Belongs to the tetrahydrofolate dehydrogenase/cyclohydrolase family. In terms of assembly, homodimer.

The enzyme catalyses (6R)-5,10-methylene-5,6,7,8-tetrahydrofolate + NADP(+) = (6R)-5,10-methenyltetrahydrofolate + NADPH. The catalysed reaction is (6R)-5,10-methenyltetrahydrofolate + H2O = (6R)-10-formyltetrahydrofolate + H(+). Its pathway is one-carbon metabolism; tetrahydrofolate interconversion. Functionally, catalyzes the oxidation of 5,10-methylenetetrahydrofolate to 5,10-methenyltetrahydrofolate and then the hydrolysis of 5,10-methenyltetrahydrofolate to 10-formyltetrahydrofolate. In Bacillus cereus (strain ATCC 10987 / NRS 248), this protein is Bifunctional protein FolD.